Here is a 795-residue protein sequence, read N- to C-terminus: Phenylalanine--tRNA ligase beta subunit (795 aa).

The tRNA-binding domain maps to 39-148 (AGQFHGVVVG…IDAPLGVDLR (110 aa)). The B5 domain occupies 401-476 (PQSATITLRR…RIYGYNNIPD (76 aa)). Mg(2+) is bound by residues D454, D460, E463, and E464. The FDX-ACB domain maps to 701–794 (SRFPSNRRDI…LKQRFQASLR (94 aa)).

The protein belongs to the phenylalanyl-tRNA synthetase beta subunit family. Type 1 subfamily. Tetramer of two alpha and two beta subunits. Mg(2+) is required as a cofactor.

It is found in the cytoplasm. It catalyses the reaction tRNA(Phe) + L-phenylalanine + ATP = L-phenylalanyl-tRNA(Phe) + AMP + diphosphate + H(+). The sequence is that of Phenylalanine--tRNA ligase beta subunit from Photorhabdus laumondii subsp. laumondii (strain DSM 15139 / CIP 105565 / TT01) (Photorhabdus luminescens subsp. laumondii).